The chain runs to 310 residues: MIIVTGGAGFIGSNIVKALNDKGITDILVVDNLKDGTKFVNLVDLNIADYMDKEDFLIQIMAGEEFGDVEAIFHEGACSSTTEWDGKYMMDNNYQYSKELLHYCLEREIPFLYASSAATYGGRTSDFIESREYEKPLNVYGYSKFLFDEYVRQILPEANSQIVGFRYFNVYGPREGHKGSMASVAFHLNTQLNNGESPKLFEGSENFKRDFVYVGDVADVNLWFLENGVSGIFNLGTGRAESFQAVADATLAYHKKGQIEYIPFPDKLKGRYQAFTQADLTNLRAAGYDKPFKTVAEGVTEYMAWLNRDA.

Residues 10–11, 31–32, Lys-38, Lys-53, 75–79, and Asn-92 each bind NADP(+); these read FI, DN, and EGACS. The active-site Proton acceptor is Tyr-140. Lys-144 lines the NADP(+) pocket. Residue Asn-169 coordinates substrate. NADP(+) is bound by residues Val-170 and Lys-178. The active-site Proton acceptor is the Lys-178. Residues Ser-180, His-187, 201–204, and Arg-209 each bind substrate; that span reads FEGS. At Lys-267 the chain carries N6-acetyllysine. Tyr-272 lines the substrate pocket.

Belongs to the NAD(P)-dependent epimerase/dehydratase family. HldD subfamily. In terms of assembly, homopentamer. Requires NADP(+) as cofactor. It depends on NAD(+) as a cofactor.

It catalyses the reaction ADP-D-glycero-beta-D-manno-heptose = ADP-L-glycero-beta-D-manno-heptose. It functions in the pathway nucleotide-sugar biosynthesis; ADP-L-glycero-beta-D-manno-heptose biosynthesis; ADP-L-glycero-beta-D-manno-heptose from D-glycero-beta-D-manno-heptose 7-phosphate: step 4/4. Its pathway is bacterial outer membrane biogenesis; LPS core biosynthesis. Its activity is regulated as follows. Completely inhibited by ADP and ADP-glucose, and partially inhibited by ATP and NADH. Functionally, catalyzes the interconversion between ADP-D-glycero-beta-D-manno-heptose and ADP-L-glycero-beta-D-manno-heptose via an epimerization at carbon 6 of the heptose. In Escherichia coli (strain K12), this protein is ADP-L-glycero-D-manno-heptose-6-epimerase (hldD).